Reading from the N-terminus, the 147-residue chain is Bis(5'-nucleosyl)-tetraphosphatase [asymmetrical] (147 aa).

The residue at position 2 (Ala-2) is an N-acetylalanine. One can recognise a Nudix hydrolase domain in the interval Ala-2 to His-139. The Nudix box motif lies at Gly-43–Gly-64.

This sequence belongs to the Nudix hydrolase family. The cofactor is a divalent metal cation.

The catalysed reaction is P(1),P(4)-bis(5'-guanosyl) tetraphosphate + H2O = GMP + GTP + 2 H(+). The enzyme catalyses a 5'-end CoA-ribonucleoside in mRNA + H2O = a 5'-end phospho-adenosine-phospho-ribonucleoside in mRNA + (R)-4'-phosphopantetheine + 2 H(+). It carries out the reaction a 5'-end FAD-phospho-ribonucleoside in mRNA + H2O = a 5'-end phospho-adenosine-phospho-ribonucleoside in mRNA + FMN + 2 H(+). Its activity is regulated as follows. Inhibited by fluoride ions. In terms of biological role, catalyzes the asymmetric hydrolysis of diadenosine 5',5'''-P1,P4-tetraphosphate (Ap4A) to yield AMP and ATP. Exhibits decapping activity towards FAD-capped RNAs and dpCoA-capped RNAs in vitro. The polypeptide is Bis(5'-nucleosyl)-tetraphosphatase [asymmetrical] (NUDT2) (Sus scrofa (Pig)).